A 118-amino-acid polypeptide reads, in one-letter code: Thioredoxin H-type 2 (118 aa).

The Thioredoxin domain maps to 2–113; that stretch reads AEEGQVIGVH…LQQTIAKHIS (112 aa). Catalysis depends on nucleophile residues cysteine 39 and cysteine 42. The cysteines at positions 39 and 42 are disulfide-linked.

The protein belongs to the thioredoxin family. Plant H-type subfamily.

It localises to the cytoplasm. Functionally, participates in various redox reactions through the reversible oxidation of the active center dithiol to a disulfide. The H form is known to activate a number of cytosolic enzymes. This is Thioredoxin H-type 2 from Nicotiana tabacum (Common tobacco).